A 465-amino-acid polypeptide reads, in one-letter code: Ribulose bisphosphate carboxylase large chain (465 aa).

At lysine 4 the chain carries N6,N6,N6-trimethyllysine. Substrate is bound by residues asparagine 113 and threonine 163. Lysine 165 serves as the catalytic Proton acceptor. Substrate is bound at residue lysine 167. The Mg(2+) site is built by lysine 191, aspartate 193, and glutamate 194. Lysine 191 carries the N6-carboxylysine modification. Histidine 284 acts as the Proton acceptor in catalysis. Residues arginine 285, histidine 317, and serine 369 each coordinate substrate.

Belongs to the RuBisCO large chain family. Type I subfamily. In terms of assembly, heterohexadecamer of 8 large chains and 8 small chains; disulfide-linked. The disulfide link is formed within the large subunit homodimers. Mg(2+) is required as a cofactor. The disulfide bond which can form in the large chain dimeric partners within the hexadecamer appears to be associated with oxidative stress and protein turnover.

The protein localises to the plastid. It localises to the chloroplast. It catalyses the reaction 2 (2R)-3-phosphoglycerate + 2 H(+) = D-ribulose 1,5-bisphosphate + CO2 + H2O. It carries out the reaction D-ribulose 1,5-bisphosphate + O2 = 2-phosphoglycolate + (2R)-3-phosphoglycerate + 2 H(+). Its function is as follows. RuBisCO catalyzes two reactions: the carboxylation of D-ribulose 1,5-bisphosphate, the primary event in carbon dioxide fixation, as well as the oxidative fragmentation of the pentose substrate in the photorespiration process. Both reactions occur simultaneously and in competition at the same active site. In Acer saccharum (Sugar maple), this protein is Ribulose bisphosphate carboxylase large chain.